Here is a 127-residue protein sequence, read N- to C-terminus: uncharacterized protein (127 aa).

The N-terminal stretch at 1 to 23 (MAGVRARAPLPLALLLSLPAAPG) is a signal peptide. Residues 43-127 (CFEVGLRKPP…ACPPRAPLWR (85 aa)) are disordered. Residues 59–70 (PPSFSSGSSRPL) show a composition bias toward low complexity.

It is found in the secreted. This is an uncharacterized protein from Homo sapiens (Human).